A 497-amino-acid polypeptide reads, in one-letter code: Probable cytosol aminopeptidase (497 aa).

Lysine 263 and aspartate 268 together coordinate Mn(2+). The active site involves lysine 275. Residues aspartate 286, aspartate 345, and glutamate 347 each contribute to the Mn(2+) site. Residue arginine 349 is part of the active site.

Belongs to the peptidase M17 family. Requires Mn(2+) as cofactor.

The protein resides in the cytoplasm. The catalysed reaction is Release of an N-terminal amino acid, Xaa-|-Yaa-, in which Xaa is preferably Leu, but may be other amino acids including Pro although not Arg or Lys, and Yaa may be Pro. Amino acid amides and methyl esters are also readily hydrolyzed, but rates on arylamides are exceedingly low.. The enzyme catalyses Release of an N-terminal amino acid, preferentially leucine, but not glutamic or aspartic acids.. Functionally, presumably involved in the processing and regular turnover of intracellular proteins. Catalyzes the removal of unsubstituted N-terminal amino acids from various peptides. The protein is Probable cytosol aminopeptidase of Brucella suis biovar 1 (strain 1330).